The chain runs to 601 residues: Cdc42-interacting protein 4 (601 aa).

The tract at residues 1–117 is required for podosome formation and interaction with AKAP9 and microtubules; that stretch reads MDWGTELWDQ…EMKQERKMHF (117 aa). Positions 1 to 117 are required for translocation to the plasma membrane in response to insulin; the sequence is MDWGTELWDQ…EMKQERKMHF (117 aa). In terms of domain architecture, F-BAR spans 1–264; that stretch reads MDWGTELWDQ…AANAVDPKND (264 aa). Positions 67–259 form a coiled coil; it reads FSQQQSFVQI…EGMKVAANAV (193 aa). Disordered stretches follow at residues 280–358, 390–420, and 479–543; these read GDVE…GRDP, DFSHLPPEQQRKRLQQQLEERSRELQKEVDQ, and RGDS…SPIG. Residues 289-302 show a composition bias toward polar residues; sequence QPMNRAPSDSSLGT. Positions 293–537 are interaction with CDC42; sequence RAPSDSSLGT…TEFDEDFEEE (245 aa). The interaction with PDE6G stretch occupies residues 293–601; sequence RAPSDSSLGT…PTSYLRVTLN (309 aa). Ser296, Ser298, and Ser299 each carry phosphoserine. The span at 314–329 shows a compositional bias: basic residues; the sequence is GRSRTKRWPFGKKNKP. Ser335 bears the Phosphoserine mark. A compositionally biased stretch (low complexity) spans 336-346; the sequence is PLGGPVPSALP. Ser351 is modified (phosphoserine). The stretch at 388-481 forms a coiled coil; it reads TEDFSHLPPE…ESRVLSNRGD (94 aa). Residues 393–470 enclose the REM-1 domain; that stretch reads HLPPEQQRKR…VQKYEAWLAE (78 aa). Residues 407–420 show a composition bias toward basic and acidic residues; the sequence is LEERSRELQKEVDQ. Positions 471-601 are required for interaction with FASLG and localization to lysosomes; that stretch reads AESRVLSNRG…PTSYLRVTLN (131 aa). Residue Ser482 is modified to Phosphoserine. The tract at residues 487–541 is interaction with DNM2 and WASL; that stretch reads ARPPDPPASAPPDSSSNSASQDTKESSEEPPSEESQDTPIYTEFDEDFEEEPTSP. Residues 497–506 show a composition bias toward low complexity; it reads PPDSSSNSAS. Positions 529 to 538 are enriched in acidic residues; the sequence is EFDEDFEEEP. The interaction with DNM1 and WASL stretch occupies residues 529-601; the sequence is EFDEDFEEEP…PTSYLRVTLN (73 aa). The interval 538–601 is required for podosome formation; the sequence is PTSPIGHCVA…PTSYLRVTLN (64 aa). Residues 540–601 enclose the SH3 domain; sequence SPIGHCVAIY…PTSYLRVTLN (62 aa). Residues 544–601 are interaction with WAS; the sequence is HCVAIYHFEGSSEGTISMAEGEDLSLMEEDKGDGWTRVRRKEGGEGYVPTSYLRVTLN. The tract at residues 546–601 is interaction with ARHGAP17, DAAM1, DIAPH1 and DIAPH2; that stretch reads VAIYHFEGSSEGTISMAEGEDLSLMEEDKGDGWTRVRRKEGGEGYVPTSYLRVTLN.

It belongs to the FNBP1 family. Interacts specifically with GTP-bound RHOQ. Interacts with DNM2 and PDE6G. Homodimerizes, the dimers can polymerize end-to-end to form filamentous structures. Interacts specifically with GTP-bound CDC42. Interacts with AKAP9, ARHGAP17, DAAM1, DIAPH1, DIAPH2, DNM1, FASLG/FASL, GAPVD1, LYN, microtubules, SRC, WAS/WASP and WASL/N-WASP. Interacts with the ligand binding domain of the thyroid receptor (TR) in the presence of thyroid hormone. May interact with CTNNB1 and HD/HTT. In terms of processing, tyrosine phosphorylated. Also phosphorylated by PKA. Expressed in brain, colon, heart, kidney, liver, lung, megakaryocyte, ovary, pancreas, peripheral blood lymphocytes, placenta, prostate, skeletal muscle, small intestine, spleen, testis, thymus and trachea.

Its subcellular location is the cytoplasm. It localises to the cytoskeleton. The protein localises to the cell cortex. The protein resides in the lysosome. It is found in the golgi apparatus. Its subcellular location is the cell membrane. It localises to the cell projection. The protein localises to the phagocytic cup. The protein resides in the perinuclear region. Functionally, required for translocation of GLUT4 to the plasma membrane in response to insulin signaling. Required to coordinate membrane tubulation with reorganization of the actin cytoskeleton during endocytosis. Binds to lipids such as phosphatidylinositol 4,5-bisphosphate and phosphatidylserine and promotes membrane invagination and the formation of tubules. Also promotes CDC42-induced actin polymerization by recruiting WASL/N-WASP which in turn activates the Arp2/3 complex. Actin polymerization may promote the fission of membrane tubules to form endocytic vesicles. Required for the formation of podosomes, actin-rich adhesion structures specific to monocyte-derived cells. May be required for the lysosomal retention of FASLG/FASL. This is Cdc42-interacting protein 4 (TRIP10) from Homo sapiens (Human).